Here is a 786-residue protein sequence, read N- to C-terminus: Endonuclease MutS2 (786 aa).

332–339 is a binding site for ATP; that stretch reads GPNTGGKT. The region spanning 710–785 is the Smr domain; sequence VDLRGLDAEE…GDGVTMVELK (76 aa).

Belongs to the DNA mismatch repair MutS family. MutS2 subfamily. Homodimer. Binds to stalled ribosomes, contacting rRNA.

Its function is as follows. Endonuclease that is involved in the suppression of homologous recombination and thus may have a key role in the control of bacterial genetic diversity. In terms of biological role, acts as a ribosome collision sensor, splitting the ribosome into its 2 subunits. Detects stalled/collided 70S ribosomes which it binds and splits by an ATP-hydrolysis driven conformational change. Acts upstream of the ribosome quality control system (RQC), a ribosome-associated complex that mediates the extraction of incompletely synthesized nascent chains from stalled ribosomes and their subsequent degradation. Probably generates substrates for RQC. The sequence is that of Endonuclease MutS2 from Clostridium beijerinckii (strain ATCC 51743 / NCIMB 8052) (Clostridium acetobutylicum).